Here is a 127-residue protein sequence, read N- to C-terminus: Photosystem II reaction center Psb28 protein (127 aa).

The interval 108-127 is disordered; that stretch reads LGYSQSQDSDQTEGADNQQA. Residues 109–127 show a composition bias toward polar residues; the sequence is GYSQSQDSDQTEGADNQQA.

This sequence belongs to the Psb28 family. Part of the photosystem II complex.

The protein resides in the cellular thylakoid membrane. The protein is Photosystem II reaction center Psb28 protein of Synechococcus sp. (strain CC9605).